The chain runs to 525 residues: D-3-phosphoglycerate dehydrogenase (525 aa).

Residues 148–149, Asp168, Thr200, 227–229, and Asp253 each bind NAD(+); these read RI and CAR. Arg229 is an active-site residue. Residue Glu258 is part of the active site. His276 functions as the Proton donor in the catalytic mechanism. 276 to 279 contributes to the NAD(+) binding site; that stretch reads HLGA. The ACT domain maps to 452-524; it reads LVYIQHQDTT…DIVSVKLIDL (73 aa).

This sequence belongs to the D-isomer specific 2-hydroxyacid dehydrogenase family.

It carries out the reaction (2R)-3-phosphoglycerate + NAD(+) = 3-phosphooxypyruvate + NADH + H(+). The enzyme catalyses (R)-2-hydroxyglutarate + NAD(+) = 2-oxoglutarate + NADH + H(+). It functions in the pathway amino-acid biosynthesis; L-serine biosynthesis; L-serine from 3-phospho-D-glycerate: step 1/3. Its activity is regulated as follows. In bacteria displays feedback inhibition by L-serine. Its function is as follows. Catalyzes the reversible oxidation of 3-phospho-D-glycerate to 3-phosphonooxypyruvate, the first step of the phosphorylated L-serine biosynthesis pathway. Also catalyzes the reversible oxidation of 2-hydroxyglutarate to 2-oxoglutarate. This Bacillus subtilis (strain 168) protein is D-3-phosphoglycerate dehydrogenase (serA).